The sequence spans 414 residues: Tyrosine--tRNA ligase (414 aa).

Residue Y35 participates in L-tyrosine binding. The short motif at 40–49 (PTADSLHVGH) is the 'HIGH' region element. L-tyrosine contacts are provided by Y164 and Q168. A 'KMSKS' region motif is present at residues 226 to 230 (KFGKT). K229 contributes to the ATP binding site. The region spanning 347–414 (TKVIDALIEV…KKKYFVILIK (68 aa)) is the S4 RNA-binding domain.

It belongs to the class-I aminoacyl-tRNA synthetase family. TyrS type 1 subfamily. Homodimer.

Its subcellular location is the cytoplasm. The enzyme catalyses tRNA(Tyr) + L-tyrosine + ATP = L-tyrosyl-tRNA(Tyr) + AMP + diphosphate + H(+). Functionally, catalyzes the attachment of tyrosine to tRNA(Tyr) in a two-step reaction: tyrosine is first activated by ATP to form Tyr-AMP and then transferred to the acceptor end of tRNA(Tyr). The chain is Tyrosine--tRNA ligase from Mycoplasma mycoides subsp. mycoides SC (strain CCUG 32753 / NCTC 10114 / PG1).